The sequence spans 226 residues: Phosphoribosylformylglycinamidine synthase subunit PurQ (226 aa).

The Glutamine amidotransferase type-1 domain occupies 3–225 (FAVIVFPGSN…VKWGARHVTY (223 aa)). Residue Cys86 is the Nucleophile of the active site. Catalysis depends on residues His194 and Glu196.

As to quaternary structure, part of the FGAM synthase complex composed of 1 PurL, 1 PurQ and 2 PurS subunits.

Its subcellular location is the cytoplasm. The catalysed reaction is N(2)-formyl-N(1)-(5-phospho-beta-D-ribosyl)glycinamide + L-glutamine + ATP + H2O = 2-formamido-N(1)-(5-O-phospho-beta-D-ribosyl)acetamidine + L-glutamate + ADP + phosphate + H(+). The enzyme catalyses L-glutamine + H2O = L-glutamate + NH4(+). It functions in the pathway purine metabolism; IMP biosynthesis via de novo pathway; 5-amino-1-(5-phospho-D-ribosyl)imidazole from N(2)-formyl-N(1)-(5-phospho-D-ribosyl)glycinamide: step 1/2. Part of the phosphoribosylformylglycinamidine synthase complex involved in the purines biosynthetic pathway. Catalyzes the ATP-dependent conversion of formylglycinamide ribonucleotide (FGAR) and glutamine to yield formylglycinamidine ribonucleotide (FGAM) and glutamate. The FGAM synthase complex is composed of three subunits. PurQ produces an ammonia molecule by converting glutamine to glutamate. PurL transfers the ammonia molecule to FGAR to form FGAM in an ATP-dependent manner. PurS interacts with PurQ and PurL and is thought to assist in the transfer of the ammonia molecule from PurQ to PurL. This chain is Phosphoribosylformylglycinamidine synthase subunit PurQ, found in Exiguobacterium sp. (strain ATCC BAA-1283 / AT1b).